The sequence spans 209 residues: Pyridoxine/pyridoxamine 5'-phosphate oxidase (209 aa).

Substrate-binding positions include 7–10 and K64; that span reads REDY. FMN contacts are provided by residues 59-64, 74-75, R80, and K81; these read RIVLLK and FT. Substrate contacts are provided by Y121, R125, and S129. FMN contacts are provided by residues 138–139 and W182; that span reads QS. 188-190 is a binding site for substrate; sequence RLH. R192 contributes to the FMN binding site.

It belongs to the pyridoxamine 5'-phosphate oxidase family. Homodimer. The cofactor is FMN.

The enzyme catalyses pyridoxamine 5'-phosphate + O2 + H2O = pyridoxal 5'-phosphate + H2O2 + NH4(+). The catalysed reaction is pyridoxine 5'-phosphate + O2 = pyridoxal 5'-phosphate + H2O2. It participates in cofactor metabolism; pyridoxal 5'-phosphate salvage; pyridoxal 5'-phosphate from pyridoxamine 5'-phosphate: step 1/1. Its pathway is cofactor metabolism; pyridoxal 5'-phosphate salvage; pyridoxal 5'-phosphate from pyridoxine 5'-phosphate: step 1/1. Its function is as follows. Catalyzes the oxidation of either pyridoxine 5'-phosphate (PNP) or pyridoxamine 5'-phosphate (PMP) into pyridoxal 5'-phosphate (PLP). This chain is Pyridoxine/pyridoxamine 5'-phosphate oxidase, found in Actinobacillus pleuropneumoniae serotype 7 (strain AP76).